Consider the following 195-residue polypeptide: MKQRKAKITRKTKETNIVVEINLDNILLPSVSTTIGFLDHMLELFAVHSGIGFKIKASGDTHIDDHHLVEDAGITIGQALKEAVGDKKGIVRYGHFLLPMDETLSYVALDLAGRFYLSYEADIKFQKNGFNYDLIQEFFYALASNAGITLHIKMIKGRNNHHIAESIFKAFGRALRQAVSYSKSKKTVPSTKGIL.

This sequence belongs to the imidazoleglycerol-phosphate dehydratase family.

It is found in the cytoplasm. It carries out the reaction D-erythro-1-(imidazol-4-yl)glycerol 3-phosphate = 3-(imidazol-4-yl)-2-oxopropyl phosphate + H2O. The protein operates within amino-acid biosynthesis; L-histidine biosynthesis; L-histidine from 5-phospho-alpha-D-ribose 1-diphosphate: step 6/9. This is Imidazoleglycerol-phosphate dehydratase from Endomicrobium trichonymphae.